We begin with the raw amino-acid sequence, 354 residues long: 3-dehydroquinate synthase (354 aa).

NAD(+) contacts are provided by residues 66-71 (SGETSK), 100-104 (GATGD), 124-125 (TT), Lys-136, Lys-145, and 163-166 (FLET). The Zn(2+) site is built by Glu-178, His-242, and His-256.

Belongs to the sugar phosphate cyclases superfamily. Dehydroquinate synthase family. The cofactor is NAD(+). Co(2+) is required as a cofactor. Zn(2+) serves as cofactor.

Its subcellular location is the cytoplasm. It carries out the reaction 7-phospho-2-dehydro-3-deoxy-D-arabino-heptonate = 3-dehydroquinate + phosphate. The protein operates within metabolic intermediate biosynthesis; chorismate biosynthesis; chorismate from D-erythrose 4-phosphate and phosphoenolpyruvate: step 2/7. Its function is as follows. Catalyzes the conversion of 3-deoxy-D-arabino-heptulosonate 7-phosphate (DAHP) to dehydroquinate (DHQ). The protein is 3-dehydroquinate synthase of Staphylococcus epidermidis (strain ATCC 35984 / DSM 28319 / BCRC 17069 / CCUG 31568 / BM 3577 / RP62A).